A 186-amino-acid chain; its full sequence is Adenylate kinase (186 aa).

G10–T15 provides a ligand contact to ATP. The segment at S30–V59 is NMP. Residues T31, R36, E57–V59, G85–R88, and Q92 contribute to the AMP site. The interval K126–D136 is LID. R127 contacts ATP. R133 and R144 together coordinate AMP. G172 serves as a coordination point for ATP.

This sequence belongs to the adenylate kinase family. Monomer.

It is found in the cytoplasm. The catalysed reaction is AMP + ATP = 2 ADP. The protein operates within purine metabolism; AMP biosynthesis via salvage pathway; AMP from ADP: step 1/1. Its function is as follows. Catalyzes the reversible transfer of the terminal phosphate group between ATP and AMP. Plays an important role in cellular energy homeostasis and in adenine nucleotide metabolism. This Bifidobacterium longum (strain NCC 2705) protein is Adenylate kinase.